We begin with the raw amino-acid sequence, 215 residues long: Cytochrome c biogenesis ATP-binding export protein CcmA (215 aa).

The ABC transporter domain maps to 3–215 (LEAENLAGER…MAAFSVEDIA (213 aa)). Residue 35–42 (GPNGSGKS) coordinates ATP.

It belongs to the ABC transporter superfamily. CcmA exporter (TC 3.A.1.107) family. The complex is composed of two ATP-binding proteins (CcmA) and two transmembrane proteins (CcmB).

The protein resides in the cell inner membrane. The enzyme catalyses heme b(in) + ATP + H2O = heme b(out) + ADP + phosphate + H(+). Its function is as follows. Part of the ABC transporter complex CcmAB involved in the biogenesis of c-type cytochromes; once thought to export heme, this seems not to be the case, but its exact role is uncertain. Responsible for energy coupling to the transport system. This Brucella melitensis biotype 1 (strain ATCC 23456 / CCUG 17765 / NCTC 10094 / 16M) protein is Cytochrome c biogenesis ATP-binding export protein CcmA.